A 490-amino-acid polypeptide reads, in one-letter code: Thyroid hormone receptor alpha (490 aa).

Residues 1-32 (MEQKPSKVECGSDPEENSARSPDGKRKRKNGQ) form a disordered region. The modulating stretch occupies residues 1–52 (MEQKPSKVECGSDPEENSARSPDGKRKRKNGQCSLKTSMSGYIPSYLDKDEQ). The Zn(2+) site is built by cysteine 53, cysteine 56, cysteine 70, cysteine 73, cysteine 91, cysteine 97, cysteine 107, and cysteine 110. 2 consecutive NR C4-type zinc fingers follow at residues 53 to 73 (CVVC…CEGC) and 91 to 115 (CKYD…FKKC). Residues 53 to 127 (CVVCGDKATG…VGMAMDLVLD (75 aa)) constitute a DNA-binding region (nuclear receptor). The NR LBD domain maps to 163 to 407 (EEWDLIHIAT…EGQQLLGMHV (245 aa)). 3,3',5-triiodo-L-thyronine-binding residues include arginine 228 and serine 277. The disordered stretch occupies residues 457–490 (AVCGEDDSSEADSPSSSEEEPEVCEDLAGNAASP).

The protein belongs to the nuclear hormone receptor family. NR1 subfamily. In terms of assembly, binds DNA as a dimer; homodimer and heterodimer with RXRB. Interacts with NCOA3 and NCOA6 coactivators, leading to a strong increase of transcription of target genes. Probably interacts with SFPQ. Interacts with C1D. Interacts with AKAP13. Interacts with TP53INP2. Interacts with PER2. Isoform alpha-2 and isoform alpha-1 interact with TACC1, but the interaction with alpha-1 is weaker. The interaction with isoform alpha-1, but not alpha-2, is decreased in the presence of thyroid hormone T3.

The protein resides in the nucleus. It localises to the cytoplasm. In terms of biological role, nuclear hormone receptor that can act as a repressor or activator of transcription. High affinity receptor for thyroid hormones, including triiodothyronine and thyroxine. Does not bind thyroid hormone and functions as a weak dominant negative inhibitor of thyroid hormone action. The polypeptide is Thyroid hormone receptor alpha (THRA) (Homo sapiens (Human)).